A 328-amino-acid chain; its full sequence is Cell division protein ZipA (328 aa).

Topologically, residues M1–N4 are periplasmic. Residues T5 to S25 traverse the membrane as a helical segment. At N26–V328 the chain is on the cytoplasmic side. The disordered stretch occupies residues S44–L82. The span at Q57 to V67 shows a compositional bias: polar residues.

This sequence belongs to the ZipA family. Interacts with FtsZ via their C-terminal domains.

It is found in the cell inner membrane. In terms of biological role, essential cell division protein that stabilizes the FtsZ protofilaments by cross-linking them and that serves as a cytoplasmic membrane anchor for the Z ring. Also required for the recruitment to the septal ring of downstream cell division proteins. This Haemophilus influenzae (strain ATCC 51907 / DSM 11121 / KW20 / Rd) protein is Cell division protein ZipA.